Here is a 1118-residue protein sequence, read N- to C-terminus: Cytospin-A (1118 aa).

Disordered stretches follow at residues 1–157 and 198–221; these read MKKS…DGQI and GGKELQEGPEEEEEEEEEEKPHVS. Composition is skewed to polar residues over residues 57 to 102 and 112 to 123; these read NPTS…TKET and SRASANKKQSAA. Positions 144–153 are enriched in basic and acidic residues; sequence SESRMSKSKS. Positions 204 to 215 are enriched in acidic residues; sequence EGPEEEEEEEEE. Residues 225 to 264 are a coiled coil; that stretch reads AADVESTLILLQEQNQAIREELNLLKSENRMLKDRLNALG. The tract at residues 289-379 is disordered; it reads AGSGQSDGGG…RRGSSGNASE (91 aa). The segment covering 343 to 363 has biased composition (low complexity); it reads SSDDALDAPSGASSSSESECA. Coiled coils occupy residues 384 to 438 and 475 to 796; these read CLTE…MDSL and GRYM…RGRV. Disordered regions lie at residues 771-790, 837-876, and 920-1001; these read QEKNEKLSKELEEVKSRKQD, FDSASQGPPSNGASVTPTVSAAPLPRTPLSPSPMKTPPAA, and SAAS…ERKD. Residues 838-855 are compositionally biased toward polar residues; that stretch reads DSASQGPPSNGASVTPTV. The span at 861-872 shows a compositional bias: pro residues; that stretch reads PRTPLSPSPMKT. The segment covering 930-945 has biased composition (polar residues); the sequence is QRVSNMDSTKTISVSR. Residues 946 to 956 show a composition bias toward basic and acidic residues; sequence RSSEEMKRDMS. Residues 961 to 986 are compositionally biased toward low complexity; that stretch reads ASSTSLMAMSAASAPLSLSSSSPTAS. Residues 1012–1117 enclose the Calponin-homology (CH) domain; the sequence is GSKRNALLKW…YVTAIYKYFE (106 aa).

Belongs to the cytospin-A family. May interact with both microtubules and actin cytoskeleton.

It localises to the cytoplasm. Its subcellular location is the cytoskeleton. It is found in the spindle. The protein localises to the cell junction. The protein resides in the gap junction. Involved in cytokinesis and spindle organization. May play a role in actin cytoskeleton organization and microtubule stabilization and hence required for proper cell adhesion and migration. The chain is Cytospin-A (specc1l) from Takifugu rubripes (Japanese pufferfish).